Reading from the N-terminus, the 318-residue chain is Cuticle collagen dpy-7 (318 aa).

Triple-helical region stretches follow at residues Gly-101 to Asp-130, Gly-147 to Asp-206, Gly-209 to Pro-235, and Gly-240 to His-278. Positions Gly-101–Lys-318 are disordered. Over residues Pro-187–Gly-204 the composition is skewed to low complexity. Pro residues-rich tracts occupy residues Pro-216–Pro-228 and Pro-250–Pro-268. Residues Gly-309 to Lys-318 are compositionally biased toward gly residues.

The protein belongs to the cuticular collagen family. Collagen polypeptide chains are complexed within the cuticle by disulfide bonds and other types of covalent cross-links.

Its function is as follows. Nematode cuticles are composed largely of collagen-like proteins. The cuticle functions both as an exoskeleton and as a barrier to protect the worm from its environment. Mutations in dpy-7 affects the body shape. The polypeptide is Cuticle collagen dpy-7 (dpy-7) (Caenorhabditis elegans).